The primary structure comprises 122 residues: Large ribosomal subunit protein uL14 (122 aa).

It belongs to the universal ribosomal protein uL14 family. As to quaternary structure, part of the 50S ribosomal subunit. Forms a cluster with proteins L3 and L19. In the 70S ribosome, L14 and L19 interact and together make contacts with the 16S rRNA in bridges B5 and B8.

Functionally, binds to 23S rRNA. Forms part of two intersubunit bridges in the 70S ribosome. This chain is Large ribosomal subunit protein uL14, found in Finegoldia magna (strain ATCC 29328 / DSM 20472 / WAL 2508) (Peptostreptococcus magnus).